The following is an 89-amino-acid chain: MATLYDNEAKIKQAIVLLQKVVNDTSVPRNIRRAASDAIRNLQDPSLSPAVRAANATAILDEISQDPNMPSQTRISIWNVVSILETIRD.

Belongs to the UPF0147 family.

This chain is UPF0147 protein Msed_2034, found in Metallosphaera sedula (strain ATCC 51363 / DSM 5348 / JCM 9185 / NBRC 15509 / TH2).